The following is a 334-amino-acid chain: Transcription initiation factor IIB (334 aa).

The TFIIB-type zinc finger occupies 34–65 (EELVCPMCDSKNIIKDYEKAEIVCEDCGCVLQ). The Zn(2+) site is built by C38, C41, C57, and C60. Repeat copies occupy residues 151–234 (SELD…SREL) and 245–326 (DYVP…ELTE).

Belongs to the TFIIB family.

Stabilizes TBP binding to an archaeal box-A promoter. Also responsible for recruiting RNA polymerase II to the pre-initiation complex (DNA-TBP-TFIIB). The sequence is that of Transcription initiation factor IIB from Methanococcus aeolicus (strain ATCC BAA-1280 / DSM 17508 / OCM 812 / Nankai-3).